A 201-amino-acid chain; its full sequence is CASP-like protein 2B2 (201 aa).

Residues 1–28 (MSYLGVGVSPGNVSGSTTKMKLIDRKVR) lie on the Cytoplasmic side of the membrane. The chain crosses the membrane as a helical span at residues 29–49 (VTELILRCLVCVLALVAAILI). The Extracellular portion of the chain corresponds to 50 to 71 (ATDVQVREIFMIQKKAKFTDMK). The chain crosses the membrane as a helical span at residues 72–92 (ALVLLVVVNGIAAGYSLVQAV). Topologically, residues 93–108 (RCVVGLMKGRVLFSKP) are cytoplasmic. The helical transmembrane segment at 109 to 129 (LAWAIFFGDQAVAYLCVAGVA) threads the bilayer. Topologically, residues 130–166 (AAAQSAAFAKLGEPELQWMKICNMYGKFCNQVGEGIA) are extracellular. The helical transmembrane segment at 167 to 187 (SALFACIGMVLISCISAFGVF) threads the bilayer. The Cytoplasmic segment spans residues 188–201 (RLYGGSKSRPSSRW).

This sequence belongs to the Casparian strip membrane proteins (CASP) family. Homodimer and heterodimers.

The protein localises to the cell membrane. This chain is CASP-like protein 2B2, found in Arabidopsis thaliana (Mouse-ear cress).